Reading from the N-terminus, the 704-residue chain is Elongation factor G (704 aa).

The 284-residue stretch at 8–291 (DKVRNIGIMA…AVVEYLASPV (284 aa)) folds into the tr-type G domain. Residues 17-24 (AHIDAGKT), 90-94 (DTPGH), and 144-147 (NKMD) contribute to the GTP site.

This sequence belongs to the TRAFAC class translation factor GTPase superfamily. Classic translation factor GTPase family. EF-G/EF-2 subfamily.

The protein localises to the cytoplasm. Catalyzes the GTP-dependent ribosomal translocation step during translation elongation. During this step, the ribosome changes from the pre-translocational (PRE) to the post-translocational (POST) state as the newly formed A-site-bound peptidyl-tRNA and P-site-bound deacylated tRNA move to the P and E sites, respectively. Catalyzes the coordinated movement of the two tRNA molecules, the mRNA and conformational changes in the ribosome. The protein is Elongation factor G of Chlorobium limicola (strain DSM 245 / NBRC 103803 / 6330).